We begin with the raw amino-acid sequence, 644 residues long: Methionine--tRNA ligase (644 aa).

The 'HIGH' region signature appears at 14-24 (YYPSAKLHIGN). Zn(2+) is bound by residues Cys129, Cys132, Cys146, and Cys149. The short motif at 299–303 (KMSKS) is the 'KMSKS' region element. Position 302 (Lys302) interacts with ATP. The 103-residue stretch at 542–644 (DVDKLDLRVV…EDIPTGSIVR (103 aa)) folds into the tRNA-binding domain.

Belongs to the class-I aminoacyl-tRNA synthetase family. MetG type 2A subfamily. In terms of assembly, homodimer. Zn(2+) is required as a cofactor.

The protein resides in the cytoplasm. The catalysed reaction is tRNA(Met) + L-methionine + ATP = L-methionyl-tRNA(Met) + AMP + diphosphate. In terms of biological role, is required not only for elongation of protein synthesis but also for the initiation of all mRNA translation through initiator tRNA(fMet) aminoacylation. The protein is Methionine--tRNA ligase (metG) of Clostridium acetobutylicum (strain ATCC 824 / DSM 792 / JCM 1419 / IAM 19013 / LMG 5710 / NBRC 13948 / NRRL B-527 / VKM B-1787 / 2291 / W).